Reading from the N-terminus, the 143-residue chain is Small ribosomal subunit protein bS18m (143 aa).

It belongs to the bacterial ribosomal protein bS18 family. In terms of assembly, component of the mitochondrial ribosome small subunit (28S) which comprises a 12S rRNA and about 30 distinct proteins.

The protein localises to the mitochondrion. The protein is Small ribosomal subunit protein bS18m (MRPS18C) of Bos taurus (Bovine).